The following is a 468-amino-acid chain: ATP synthase subunit beta (468 aa).

ATP is bound at residue 148–155 (GGAGVGKT).

It belongs to the ATPase alpha/beta chains family. In terms of assembly, F-type ATPases have 2 components, CF(1) - the catalytic core - and CF(0) - the membrane proton channel. CF(1) has five subunits: alpha(3), beta(3), gamma(1), delta(1), epsilon(1). CF(0) has three main subunits: a(1), b(2) and c(9-12). The alpha and beta chains form an alternating ring which encloses part of the gamma chain. CF(1) is attached to CF(0) by a central stalk formed by the gamma and epsilon chains, while a peripheral stalk is formed by the delta and b chains.

The protein resides in the cell inner membrane. The enzyme catalyses ATP + H2O + 4 H(+)(in) = ADP + phosphate + 5 H(+)(out). In terms of biological role, produces ATP from ADP in the presence of a proton gradient across the membrane. The catalytic sites are hosted primarily by the beta subunits. This is ATP synthase subunit beta from Xanthomonas oryzae pv. oryzae (strain KACC10331 / KXO85).